We begin with the raw amino-acid sequence, 21 residues long: Large ribosomal subunit protein uL10 (21 aa).

The protein belongs to the universal ribosomal protein uL10 family. In terms of assembly, part of the ribosomal stalk of the 50S ribosomal subunit. The N-terminus interacts with L11 and the large rRNA to form the base of the stalk. The C-terminus forms an elongated spine to which L12 dimers bind in a sequential fashion forming a multimeric L10(L12)X complex.

Functionally, forms part of the ribosomal stalk, playing a central role in the interaction of the ribosome with GTP-bound translation factors. This chain is Large ribosomal subunit protein uL10 (rplJ), found in Proteus vulgaris.